The sequence spans 267 residues: Cyclin-C (267 aa).

One can recognise a Cyclin N-terminal domain in the interval Ile48–Ile151.

Belongs to the cyclin family. Cyclin C subfamily. Component of the Cdk8 module of the Mediator complex, composed of CycC, Cdk8, kto and skd.

It is found in the nucleus. Functionally, component of the Mediator complex, a coactivator involved in regulated gene transcription of nearly all RNA polymerase II-dependent genes. Mediator functions as a bridge to convey information from gene-specific regulatory proteins to the basal RNA polymerase II transcription machinery. Mediator is recruited to promoters by direct interactions with regulatory proteins and serves as a scaffold for the assembly of a functional preinitiation complex with RNA polymerase II and the general transcription factors. Binds to and activates cyclin-dependent kinase Cdk8 that phosphorylates the CTD (C-terminal domain) of the large subunit of RNA polymerase II (RNAp II), which may inhibit the formation of a transcription initiation complex. Required for leg and eye development and macrochaete specification or differentiation. In Drosophila melanogaster (Fruit fly), this protein is Cyclin-C (CycC).